The chain runs to 184 residues: Bifunctional protein PyrR (184 aa).

The PRPP-binding signature appears at 105-117 (VVMVDDVLFTGRT).

It belongs to the purine/pyrimidine phosphoribosyltransferase family. PyrR subfamily.

The catalysed reaction is UMP + diphosphate = 5-phospho-alpha-D-ribose 1-diphosphate + uracil. Its function is as follows. Regulates the transcription of the pyrimidine nucleotide (pyr) operon in response to exogenous pyrimidines. In terms of biological role, also displays a weak uracil phosphoribosyltransferase activity which is not physiologically significant. This Rubrobacter xylanophilus (strain DSM 9941 / JCM 11954 / NBRC 16129 / PRD-1) protein is Bifunctional protein PyrR.